A 413-amino-acid polypeptide reads, in one-letter code: Precorrin-6Y C(5,15)-methyltransferase [decarboxylating] (413 aa).

It belongs to the precorrin methyltransferase family.

It catalyses the reaction precorrin-6B + 2 S-adenosyl-L-methionine = precorrin-8X + 2 S-adenosyl-L-homocysteine + CO2 + 3 H(+). Its pathway is cofactor biosynthesis; adenosylcobalamin biosynthesis; cob(II)yrinate a,c-diamide from precorrin-2 (aerobic route): step 7/10. Its function is as follows. Catalyzes the methylation of both C-5 and C-15 in precorrin-6Y to form precorrin-8X. The polypeptide is Precorrin-6Y C(5,15)-methyltransferase [decarboxylating] (cobL) (Sinorhizobium sp).